The sequence spans 430 residues: Cyclin-A2 (430 aa).

Met1 carries the N-acetylmethionine modification. Disordered regions lie at residues Met1–Asp80 and Glu106–Ala129. A Phosphoserine modification is found at Ser5. Over residues Glu107–Ser120 the composition is skewed to basic and acidic residues.

It belongs to the cyclin family. Cyclin AB subfamily. In terms of assembly, interacts with the CDK1 and CDK2 protein kinases to form serine/threonine kinase holoenzyme complexes. Interacts with CDK1 (hyperphosphorylated form in G1 and underphosphorylated forms in S and G2). Interacts with CDK2; the interaction increases from G1 to G2. Interacts (associated with CDK2 but not with CDK1) with SCAPER; regulates the activity of CCNA2/CDK2 by transiently maintaining CCNA2 in the cytoplasm. Forms a ternary complex with CDK2 and CDKN1B; CDKN1B inhibits the kinase activity of CDK2 through conformational rearrangements. Interacts with INCA1. In terms of processing, polyubiquitinated via 'Lys-11'-linked ubiquitin by the anaphase-promoting complex (APC/C), leading to its degradation by the proteasome. Deubiquitinated and stabilized by USP37 enables entry into S phase. Ubiquitinated during the G1 phase by the SCF(FBXO31) complex, leading to its proteasomal degradation.

The protein resides in the nucleus. It is found in the cytoplasm. In terms of biological role, cyclin which controls both the G1/S and the G2/M transition phases of the cell cycle. Functions through the formation of specific serine/threonine kinase holoenzyme complexes with the cyclin-dependent protein kinases CDK1 and CDK2. The cyclin subunit confers the substrate specificity of these complexes and differentially interacts with and activates CDK1 and CDK2 throughout the cell cycle. This is Cyclin-A2 from Bos taurus (Bovine).